We begin with the raw amino-acid sequence, 357 residues long: Alanine racemase (357 aa).

Lys35 acts as the Proton acceptor; specific for D-alanine in catalysis. Lys35 bears the N6-(pyridoxal phosphate)lysine mark. Arg130 lines the substrate pocket. The active-site Proton acceptor; specific for L-alanine is Tyr255. Residue Met303 coordinates substrate.

This sequence belongs to the alanine racemase family. The cofactor is pyridoxal 5'-phosphate.

The enzyme catalyses L-alanine = D-alanine. It functions in the pathway amino-acid biosynthesis; D-alanine biosynthesis; D-alanine from L-alanine: step 1/1. Catalyzes the interconversion of L-alanine and D-alanine. May also act on other amino acids. The sequence is that of Alanine racemase (alr) from Nitrosospira multiformis (strain ATCC 25196 / NCIMB 11849 / C 71).